The sequence spans 183 residues: Ribulose bisphosphate carboxylase small subunit, chloroplastic 4 (183 aa).

A chloroplast-targeting transit peptide spans 1 to 57; that stretch reads MASSLMSNAATTMAAATTTAQANMVAPFNGLKSISAFPVTRKNNDITSVASNGGRVQ.

This sequence belongs to the RuBisCO small chain family. Heterohexadecamer of 8 large and 8 small subunits.

It is found in the plastid. It localises to the chloroplast. Its function is as follows. RuBisCO catalyzes two reactions: the carboxylation of D-ribulose 1,5-bisphosphate, the primary event in carbon dioxide fixation, as well as the oxidative fragmentation of the pentose substrate. Both reactions occur simultaneously and in competition at the same active site. Although the small subunit is not catalytic it is essential for maximal activity. The sequence is that of Ribulose bisphosphate carboxylase small subunit, chloroplastic 4 from Mesembryanthemum crystallinum (Common ice plant).